A 93-amino-acid chain; its full sequence is Protein 6 (93 aa).

Residues 1–16 (MSSQQETNDKSNTQGH) are compositionally biased toward polar residues. A disordered region spans residues 1-52 (MSSQQETNDKSNTQGHPETDPEGKTGTDTGNTEDSPPDTDNVPITDDAIMDD).

It localises to the virion. In Rice yellow stunt virus (RYSV), this protein is Protein 6 (6).